A 198-amino-acid polypeptide reads, in one-letter code: HTH-type transcriptional regulator BetI (198 aa).

The HTH tetR-type domain occupies 8 to 68 (PIRRQQLIDA…ATMRYLISHL (61 aa)). The H-T-H motif DNA-binding region spans 31 to 50 (TIAQIARRAGVSNGIISHYF).

Its pathway is amine and polyamine biosynthesis; betaine biosynthesis via choline pathway [regulation]. Its function is as follows. Repressor involved in the biosynthesis of the osmoprotectant glycine betaine. It represses transcription of the choline transporter BetT and the genes of BetAB involved in the synthesis of glycine betaine. This is HTH-type transcriptional regulator BetI from Serratia proteamaculans (strain 568).